Reading from the N-terminus, the 231-residue chain is Large ribosomal subunit protein uL1 (231 aa).

The protein belongs to the universal ribosomal protein uL1 family. As to quaternary structure, part of the 50S ribosomal subunit.

Its function is as follows. Binds directly to 23S rRNA. The L1 stalk is quite mobile in the ribosome, and is involved in E site tRNA release. In terms of biological role, protein L1 is also a translational repressor protein, it controls the translation of the L11 operon by binding to its mRNA. This chain is Large ribosomal subunit protein uL1, found in Staphylococcus carnosus (strain TM300).